The sequence spans 253 residues: Dihydroanticapsin 7-dehydrogenase (253 aa).

Residue 9 to 31 participates in NAD(+) binding; that stretch reads LITGGASGIGYAAVQAFLGQQAN. Residue Ser-139 participates in substrate binding. Tyr-152 (proton acceptor) is an active-site residue.

The protein belongs to the short-chain dehydrogenases/reductases (SDR) family.

It carries out the reaction L-dihydroanticapsin + NAD(+) = L-anticapsin + NADH + H(+). It functions in the pathway antibiotic biosynthesis; bacilysin biosynthesis. In terms of biological role, part of the bacABCDEFG operon responsible for the biosynthesis of bacilysin, an irreversible inactivator of the glutaminase domain of glucosamine synthetase. Catalyzes the dehydrogenation of the C7-hydroxyl group in the 4S-tetrahydrotyrosine (4S-H4Tyr) to yield anticapsin (epoxycyclohexanonyl-Ala). It is not able to oxidize the 4R-H4Tyr diastereomer and the dihydrobacilysin dipeptide (L-Ala-4S-H4Tyr dipeptide). In Bacillus subtilis (strain 168), this protein is Dihydroanticapsin 7-dehydrogenase.